A 226-amino-acid chain; its full sequence is CRISPR-associated endonuclease Cas3-HD (226 aa).

Residues 9-204 (GRDCLQTYED…HVLTVCDNWG (196 aa)) enclose the HD Cas3-type domain. Residues D56, H74, H101, and H102 each contribute to the Mg(2+) site.

The protein belongs to the CRISPR-associated nuclease Cas3-HD family. Monomer. Can form a Cascade complex with Csa5, Cas7, Cas5a, Cas3 and Cas8a2. Mg(2+) serves as cofactor.

In terms of biological role, CRISPR (clustered regularly interspaced short palindromic repeat), is an adaptive immune system that provides protection against mobile genetic elements (viruses, transposable elements and conjugative plasmids). CRISPR clusters contain sequences complementary to antecedent mobile elements and target invading nucleic acids. CRISPR clusters are transcribed and processed into CRISPR RNA (crRNA). Cas3 plus Cascade participate in CRISPR interference, the third stage of CRISPR immunity. Acts as a ssDNA and ssRNA nuclease, probably with both exo- and endonuclease activities. Activity is higher for DNA than RNA. This Thermoproteus tenax (strain ATCC 35583 / DSM 2078 / JCM 9277 / NBRC 100435 / Kra 1) protein is CRISPR-associated endonuclease Cas3-HD (cas3').